Consider the following 521-residue polypeptide: Cytokinin dehydrogenase 9 (521 aa).

An N-terminal signal peptide occupies residues 1 to 22 (MRPSLLQYLKLLLLLALGGVTT). An N-linked (GlcNAc...) asparagine glycan is attached at N57. An FAD-binding PCMH-type domain is found at 59-237 (SSFPPVAVLH…TRARIPLEPA (179 aa)). The FAD site is built by A95, G97, and G99. H100 is subject to Pros-8alpha-FAD histidine. Positions 101, 105, 161, 166, 172, 176, and 227 each coordinate FAD. N278, N412, and N418 each carry an N-linked (GlcNAc...) asparagine glycan. Y469 provides a ligand contact to FAD. N-linked (GlcNAc...) asparagine glycosylation is present at N472. An FAD-binding site is contributed by Q507.

This sequence belongs to the oxygen-dependent FAD-linked oxidoreductase family. As to quaternary structure, monomer. The cofactor is FAD. Expressed in inflorescence meristems.

The protein localises to the secreted. Its subcellular location is the extracellular space. It is found in the cytoplasm. The protein resides in the cytosol. It localises to the nucleus. The catalysed reaction is N(6)-dimethylallyladenine + A + H2O = 3-methyl-2-butenal + adenine + AH2. Its function is as follows. Catalyzes the oxidation of cytokinins, a family of N(6)-substituted adenine derivatives that are plant hormones, where the substituent is an isopentenyl group. Possesses cytokinin oxidase activity toward trans-zeatin (tZ) and N6-(2-isopentenyl)adenine (2iP) in vitro. Functions as a primary strigolactone-responsive gene to regulate rice tillering, plant height, and panicle size, likely via a secondary response gene, RR5, which encodes a cytokinin-inducible rice type-A response regulator that seems to act as negative regulator of the cytokinin signaling. In Oryza sativa subsp. japonica (Rice), this protein is Cytokinin dehydrogenase 9.